Consider the following 397-residue polypeptide: 1-deoxy-D-xylulose 5-phosphate reductoisomerase (397 aa).

NADPH contacts are provided by Thr17, Gly18, Ser19, Ile20, Asn47, and Asn130. Residue Lys131 participates in 1-deoxy-D-xylulose 5-phosphate binding. Glu132 serves as a coordination point for NADPH. Asp156 provides a ligand contact to Mn(2+). 1-deoxy-D-xylulose 5-phosphate is bound by residues Ser157, Glu158, Ser182, and His205. Glu158 lines the Mn(2+) pocket. Gly211 contacts NADPH. Ser218, Asn223, Lys224, and Glu227 together coordinate 1-deoxy-D-xylulose 5-phosphate. Glu227 serves as a coordination point for Mn(2+).

It belongs to the DXR family. It depends on Mg(2+) as a cofactor. Mn(2+) is required as a cofactor.

It carries out the reaction 2-C-methyl-D-erythritol 4-phosphate + NADP(+) = 1-deoxy-D-xylulose 5-phosphate + NADPH + H(+). It functions in the pathway isoprenoid biosynthesis; isopentenyl diphosphate biosynthesis via DXP pathway; isopentenyl diphosphate from 1-deoxy-D-xylulose 5-phosphate: step 1/6. In terms of biological role, catalyzes the NADPH-dependent rearrangement and reduction of 1-deoxy-D-xylulose-5-phosphate (DXP) to 2-C-methyl-D-erythritol 4-phosphate (MEP). This is 1-deoxy-D-xylulose 5-phosphate reductoisomerase from Rhizobium rhizogenes (strain K84 / ATCC BAA-868) (Agrobacterium radiobacter).